The following is a 216-amino-acid chain: NADH-quinone oxidoreductase subunit C (216 aa).

The protein belongs to the complex I 30 kDa subunit family. In terms of assembly, NDH-1 is composed of 14 different subunits. Subunits NuoB, C, D, E, F, and G constitute the peripheral sector of the complex.

The protein resides in the cell inner membrane. The enzyme catalyses a quinone + NADH + 5 H(+)(in) = a quinol + NAD(+) + 4 H(+)(out). In terms of biological role, NDH-1 shuttles electrons from NADH, via FMN and iron-sulfur (Fe-S) centers, to quinones in the respiratory chain. The immediate electron acceptor for the enzyme in this species is believed to be ubiquinone. Couples the redox reaction to proton translocation (for every two electrons transferred, four hydrogen ions are translocated across the cytoplasmic membrane), and thus conserves the redox energy in a proton gradient. The chain is NADH-quinone oxidoreductase subunit C from Francisella tularensis subsp. tularensis (strain FSC 198).